The following is a 148-amino-acid chain: Large ribosomal subunit protein uL22 (148 aa).

The protein belongs to the universal ribosomal protein uL22 family. As to quaternary structure, part of the 50S ribosomal subunit.

In terms of biological role, this protein binds specifically to 23S rRNA. It makes multiple contacts with different domains of the 23S rRNA in the assembled 50S subunit and ribosome. Its function is as follows. The globular domain of the protein is located near the polypeptide exit tunnel on the outside of the subunit, while an extended beta-hairpin is found that lines the wall of the exit tunnel in the center of the 70S ribosome. The protein is Large ribosomal subunit protein uL22 of Thermoplasma volcanium (strain ATCC 51530 / DSM 4299 / JCM 9571 / NBRC 15438 / GSS1).